A 229-amino-acid chain; its full sequence is Enolase-phosphatase E1 (229 aa).

The protein belongs to the HAD-like hydrolase superfamily. MasA/MtnC family. In terms of assembly, monomer. Requires Mg(2+) as cofactor.

The enzyme catalyses 5-methylsulfanyl-2,3-dioxopentyl phosphate + H2O = 1,2-dihydroxy-5-(methylsulfanyl)pent-1-en-3-one + phosphate. It functions in the pathway amino-acid biosynthesis; L-methionine biosynthesis via salvage pathway; L-methionine from S-methyl-5-thio-alpha-D-ribose 1-phosphate: step 3/6. Its pathway is amino-acid biosynthesis; L-methionine biosynthesis via salvage pathway; L-methionine from S-methyl-5-thio-alpha-D-ribose 1-phosphate: step 4/6. Its function is as follows. Bifunctional enzyme that catalyzes the enolization of 2,3-diketo-5-methylthiopentyl-1-phosphate (DK-MTP-1-P) into the intermediate 2-hydroxy-3-keto-5-methylthiopentenyl-1-phosphate (HK-MTPenyl-1-P), which is then dephosphorylated to form the acireductone 1,2-dihydroxy-3-keto-5-methylthiopentene (DHK-MTPene). In Yersinia pseudotuberculosis serotype IB (strain PB1/+), this protein is Enolase-phosphatase E1.